Reading from the N-terminus, the 190-residue chain is Lipid A acyltransferase PagP (190 aa).

The first 29 residues, 1-29, serve as a signal peptide directing secretion; the sequence is MYVAMIIRKYFLIIALLVMPWLAIPSVSA. Catalysis depends on residues H62, D105, and S106.

Belongs to the lipid A palmitoyltransferase family. In terms of assembly, homodimer.

It is found in the cell outer membrane. The catalysed reaction is a lipid A + a 1,2-diacyl-sn-glycero-3-phosphocholine = a hepta-acyl lipid A + a 2-acyl-sn-glycero-3-phosphocholine. It carries out the reaction a lipid IVA + a 1,2-diacyl-sn-glycero-3-phosphocholine = a lipid IVB + a 2-acyl-sn-glycero-3-phosphocholine. It catalyses the reaction a lipid IIA + a 1,2-diacyl-sn-glycero-3-phosphocholine = a lipid IIB + a 2-acyl-sn-glycero-3-phosphocholine. Functionally, transfers a fatty acid residue from the sn-1 position of a phospholipid to the N-linked hydroxyfatty acid chain on the proximal unit of lipid A or its precursors. The polypeptide is Lipid A acyltransferase PagP (Salmonella typhi).